Reading from the N-terminus, the 256-residue chain is Enolase-phosphatase E1 (256 aa).

Residues Asp-14 and Glu-16 each contribute to the Mg(2+) site. Substrate-binding positions include Ser-142–Ser-143 and Lys-176. Residue Asp-201 participates in Mg(2+) binding.

The protein belongs to the HAD-like hydrolase superfamily. MasA/MtnC family. In terms of assembly, monomer. The cofactor is Mg(2+).

It is found in the cytoplasm. The protein localises to the nucleus. The catalysed reaction is 5-methylsulfanyl-2,3-dioxopentyl phosphate + H2O = 1,2-dihydroxy-5-(methylsulfanyl)pent-1-en-3-one + phosphate. It participates in amino-acid biosynthesis; L-methionine biosynthesis via salvage pathway; L-methionine from S-methyl-5-thio-alpha-D-ribose 1-phosphate: step 3/6. The protein operates within amino-acid biosynthesis; L-methionine biosynthesis via salvage pathway; L-methionine from S-methyl-5-thio-alpha-D-ribose 1-phosphate: step 4/6. In terms of biological role, bifunctional enzyme that catalyzes the enolization of 2,3-diketo-5-methylthiopentyl-1-phosphate (DK-MTP-1-P) into the intermediate 2-hydroxy-3-keto-5-methylthiopentenyl-1-phosphate (HK-MTPenyl-1-P), which is then dephosphorylated to form the acireductone 1,2-dihydroxy-3-keto-5-methylthiopentene (DHK-MTPene). This Drosophila melanogaster (Fruit fly) protein is Enolase-phosphatase E1.